Here is a 631-residue protein sequence, read N- to C-terminus: 1,4-alpha-glucan branching enzyme GlgB (631 aa).

The active-site Nucleophile is aspartate 309. The Proton donor role is filled by glutamate 362.

It belongs to the glycosyl hydrolase 13 family. GlgB subfamily. As to quaternary structure, monomer.

The enzyme catalyses Transfers a segment of a (1-&gt;4)-alpha-D-glucan chain to a primary hydroxy group in a similar glucan chain.. It functions in the pathway glycan biosynthesis; glycogen biosynthesis. In terms of biological role, catalyzes the formation of the alpha-1,6-glucosidic linkages in glycogen by scission of a 1,4-alpha-linked oligosaccharide from growing alpha-1,4-glucan chains and the subsequent attachment of the oligosaccharide to the alpha-1,6 position. The polypeptide is 1,4-alpha-glucan branching enzyme GlgB (Marinobacter nauticus (strain ATCC 700491 / DSM 11845 / VT8) (Marinobacter aquaeolei)).